We begin with the raw amino-acid sequence, 510 residues long: Bifunctional purine biosynthesis protein PurH (510 aa).

The region spanning 1 to 142 is the MGS-like domain; sequence MRALLSVSDK…KNYKDVMVLC (142 aa).

Belongs to the PurH family.

It catalyses the reaction (6R)-10-formyltetrahydrofolate + 5-amino-1-(5-phospho-beta-D-ribosyl)imidazole-4-carboxamide = 5-formamido-1-(5-phospho-D-ribosyl)imidazole-4-carboxamide + (6S)-5,6,7,8-tetrahydrofolate. The catalysed reaction is IMP + H2O = 5-formamido-1-(5-phospho-D-ribosyl)imidazole-4-carboxamide. Its pathway is purine metabolism; IMP biosynthesis via de novo pathway; 5-formamido-1-(5-phospho-D-ribosyl)imidazole-4-carboxamide from 5-amino-1-(5-phospho-D-ribosyl)imidazole-4-carboxamide (10-formyl THF route): step 1/1. It functions in the pathway purine metabolism; IMP biosynthesis via de novo pathway; IMP from 5-formamido-1-(5-phospho-D-ribosyl)imidazole-4-carboxamide: step 1/1. This is Bifunctional purine biosynthesis protein PurH from Campylobacter jejuni subsp. jejuni serotype O:2 (strain ATCC 700819 / NCTC 11168).